A 1169-amino-acid polypeptide reads, in one-letter code: MPVAARYIFLTGLFLLSVANVALGTTEACLPAGEKKNGMTINFYQYSLKDSSTYSNPSYMAYGYADAEKLGSVSGQTKLSIDYSIPCNGASDTCACSDDDATEYSASQVVPVKRGVKLCSDNTTLSSKTEKRENDDCDQGAAYWSSDLFGFYTTPTNVTVEMTGYFLPPKTGTYTFGFATVDDSAILSVGGNVAFECCKQEQPPITSTDFTINGIKPWNADAPTDIKGSTYMYAGYYYPIKIVYSNAVSWGTLPVSVVLPDGTEVNDDFEGYVFSFDDNATQAHCSVPNPAEHARTCVSSATSSWSSSEVCTECTETESTSYVTPYVTSSSWSSSEVCTECTETESTSTSTPYVTSSSSSSSEVCTECTETESTSYVTPYVSSSTAAANYTSSFSSSSEVCTECTETESTSTSTPYVTSSSWSSSEVCTECTETESTSYVTPYVSSSTAAANYTSSFSSSSEVCTECTETESTSTSTPYVTSSSSSSSEVCTECTETESTSYVTPYVSSSTAAANYTSSFSSSSEVCTECTETESTSTSTPYVTSSSWSSSEVCTECTETESTSYVTPYVSSSTAAANYTSSFSSSSEVCTECTETESTSTSTPYATSSTGTATSFTASTSNTMTSLVQTDTTVSFSLSSTVSEHTNAPTSSVESNASTFISSNKGSVKSYVTSSIHSITPMYPSNQTVTSSSVVSTPITSESSESSASVTILPSTITSEFKPSTMKTKVVSISSSPTNLITSYDTTSKDSTVGSSTSSVSLISSISLPSSYSASSEQIFHSSIVSSNGQALTSFSSTKVSSSESSESHRTSPTTSSESGIKSSGVEIESTSTSSFSFHETSTASTSVQISSQFVTPSSPISTVAPRSTGLNSQTESTNSSKETMSSENSASVMPSSSATSPKTGKVTSDETSSGFSRDRTTVYRMTSETPSTNEQTTLITVSSCESNSCSNTVSSAVVSTATTTINGITTEYTTWCPLSATELTTVSKLESEEKTTLITVTSCESGVCSETASPAIVSTATATVNDVVTVYSTWSPQATNKLAVSSDIENSASKASFVSEAAETKSISRNNNFVPTSGTTSIETHTTTTSNASENSDNVSASEAVSSKSVTNPVLISVSQQPRGTPASSMIGSSTASLEMSSYLGIANHLLTNSGISIFIASLLLAIV.

The signal sequence occupies residues 1–24 (MPVAARYIFLTGLFLLSVANVALG). The region spanning 111-271 (PVKRGVKLCS…GTEVNDDFEG (161 aa)) is the PA14 domain. Residues N122, N157, and N279 are each glycosylated (N-linked (GlcNAc...) asparagine). 10 consecutive repeat copies span residues 303–326 (SSWS…VTPY), 330–356 (SSWS…YVTS), 357–383 (SSSS…YVSS), 384–419 (STAA…YVTS), 420–446 (SSWS…YVSS), 447–482 (STAA…YVTS), 483–509 (SSSS…YVSS), 510–545 (STAA…YVTS), 546–572 (SSWS…YVSS), and 573–608 (STAA…YATS). Residues 303–572 (SSWSSSEVCT…TSYVTPYVSS (270 aa)) form a 6 X 27 AA approximate repeats, Ser/Thr-rich region. Residues 384–608 (STAAANYTSS…TSTSTPYATS (225 aa)) are 4 X 36 AA approximate repeats, Ser/Thr-rich. N-linked (GlcNAc...) asparagine glycosylation is present at N389. Residue N452 is glycosylated (N-linked (GlcNAc...) asparagine). Residue N515 is glycosylated (N-linked (GlcNAc...) asparagine). 3 N-linked (GlcNAc...) asparagine glycosylation sites follow: N578, N656, and N686. Residues 798–819 (TKVSSSESSESHRTSPTTSSES) show a composition bias toward low complexity. Disordered regions lie at residues 798 to 837 (TKVS…SSFS), 856 to 920 (TPSS…SRDR), and 1070 to 1107 (RNNN…EAVS). The span at 856 to 884 (TPSSPISTVAPRSTGLNSQTESTNSSKET) shows a compositional bias: polar residues. N879 carries an N-linked (GlcNAc...) asparagine glycan. Residues 886 to 902 (SSENSASVMPSSSATSP) are compositionally biased toward low complexity. Over residues 906–916 (KVTSDETSSGF) the composition is skewed to polar residues. Residues 1077–1107 (TSGTTSIETHTTTTSNASENSDNVSASEAVS) show a composition bias toward low complexity. Residues N1092 and N1099 are each glycosylated (N-linked (GlcNAc...) asparagine). G1146 carries GPI-anchor amidated glycine lipidation. The propeptide at 1147-1169 (IANHLLTNSGISIFIASLLLAIV) is removed in mature form.

Belongs to the flocculin family. Post-translationally, extensively O-glycosylated. In terms of processing, the GPI-anchor is attached to the protein in the endoplasmic reticulum and serves to target the protein to the cell surface. There, the glucosamine-inositol phospholipid moiety is cleaved off and the GPI-modified mannoprotein is covalently attached via its lipidless GPI glycan remnant to the 1,6-beta-glucan of the outer cell wall layer.

The protein resides in the secreted. Its subcellular location is the cell wall. It is found in the membrane. In terms of biological role, cell wall protein that participates directly in adhesive cell-cell interactions during yeast flocculation, a reversible, asexual and Ca(2+)-dependent process in which cells adhere to form aggregates (flocs) consisting of thousands of cells. The lectin-like protein sticks out of the cell wall of flocculent cells and selectively binds mannose residues in the cell walls of adjacent cells. Activity is inhibited by mannose, glucose, maltose and sucrose. Also involved in cell-substrate adhesion, haploid invasive growth and diploid pseudohyphae formation. In Saccharomyces cerevisiae (strain ATCC 204508 / S288c) (Baker's yeast), this protein is Flocculation protein FLO10 (FLO10).